Here is a 93-residue protein sequence, read N- to C-terminus: Defensin-like protein 209 (93 aa).

The first 19 residues, 1-19, serve as a signal peptide directing secretion; the sequence is MKITILFLTLLVLSSSCTS. 3 disulfides stabilise this stretch: Cys-63–Cys-80, Cys-66–Cys-85, and Cys-70–Cys-87.

Belongs to the DEFL family.

The protein localises to the secreted. The chain is Defensin-like protein 209 from Arabidopsis thaliana (Mouse-ear cress).